The chain runs to 375 residues: uncharacterized protein (375 aa).

Lysine 99 participates in a covalent cross-link: Isoglutamyl lysine isopeptide (Lys-Gln) (interchain with Q-Cter in protein Pup).

This sequence belongs to the IMPDH/GMPR family.

This is an uncharacterized protein from Mycolicibacterium smegmatis (strain ATCC 700084 / mc(2)155) (Mycobacterium smegmatis).